A 418-amino-acid polypeptide reads, in one-letter code: Creatine kinase U-type, mitochondrial (418 aa).

Residues M1–A39 constitute a mitochondrion transit peptide. The tract at residues A40–M64 is cardiolipin-binding. In terms of domain architecture, Phosphagen kinase N-terminal spans R46–N132. S152 bears the Phosphoserine mark. The 243-residue stretch at Y159 to L401 folds into the Phosphagen kinase C-terminal domain. S162–R166 provides a ligand contact to ATP. S197 carries the post-translational modification Phosphoserine. Position 214 is a phosphothreonine (T214). H225 is an ATP binding site. Phosphoserine is present on S233. ATP contacts are provided by residues R270, R326, and R354–V359. Phosphothreonine is present on T356. S366 is modified (phosphoserine). D369 lines the ATP pocket.

This sequence belongs to the ATP:guanido phosphotransferase family. In terms of assembly, exists as an octamer composed of four MTCK homodimers.

It is found in the mitochondrion inner membrane. The catalysed reaction is creatine + ATP = N-phosphocreatine + ADP + H(+). Functionally, reversibly catalyzes the transfer of phosphate between ATP and various phosphogens (e.g. creatine phosphate). Creatine kinase isoenzymes play a central role in energy transduction in tissues with large, fluctuating energy demands, such as skeletal muscle, heart, brain and spermatozoa. In Mus musculus (Mouse), this protein is Creatine kinase U-type, mitochondrial (Ckmt1).